The primary structure comprises 1083 residues: Kinesin-like protein klp-19 (1083 aa).

The 323-residue stretch at 6–328 (SLRVVVRARP…LRYADRAKQI (323 aa)) folds into the Kinesin motor domain. ATP is bound at residue 85–92 (GQTGSGKT). Positions 408-435 (MSALTQKNSRLEEDKAKLQSMLTDVRNT) form a coiled coil. Acidic residues predominate over residues 458-471 (TEESTTLADDDNDE). Positions 458-479 (TEESTTLADDDNDETALGGQDD) are disordered. Positions 487 to 650 (LPELQAELDD…KSKLQKREND (164 aa)) form a coiled coil. Positions 1044–1055 (DDSQPSPSNSTF) are enriched in polar residues. Residues 1044–1083 (DDSQPSPSNSTFVIGAAPTSEADGVPPIKRKSRRTDLGPL) form a disordered region.

It belongs to the TRAFAC class myosin-kinesin ATPase superfamily. Kinesin family. As to expression, expressed in the gonad.

The protein resides in the nucleus. Its subcellular location is the nucleoplasm. It is found in the cytoplasm. It localises to the cytoskeleton. The protein localises to the spindle. The protein resides in the chromosome. Required for chromosome movement and orientation on spindle poles in mitosis and meiosis. May play a role in early anterior-posterior chromosome movement in mitotic embryos. The polypeptide is Kinesin-like protein klp-19 (Caenorhabditis elegans).